A 42-amino-acid polypeptide reads, in one-letter code: Delta-actitoxin-Ael2d (42 aa).

Intrachain disulfides connect cysteine 4–cysteine 37, cysteine 6–cysteine 30, and cysteine 20–cysteine 38.

Belongs to the sea anemone type 3 (BDS) potassium channel toxin family.

The protein resides in the secreted. It is found in the nematocyst. In terms of biological role, binds to voltage-gated sodium channels (Nav), and slows down the inactivation of mammalian Nav1.2/SCN2A, Nav1.3/SCN3A Nav1.4/SCN4A, Nav1.6/SCN8A, insect DmNav1 and BgNav1 channels, and arachnid VdNav1 channel. This toxin acts by binding to site 3 of sodium channels. The chain is Delta-actitoxin-Ael2d from Anthopleura elegantissima (Green aggregating anemone).